Here is a 35-residue protein sequence, read N- to C-terminus: Peptide ToHyp2 (35 aa).

Over residues 1–29 (LPKPPLLPPPVPGLAPGLPPLPVPDPVPH) the composition is skewed to pro residues. The tract at residues 1 to 35 (LPKPPLLPPPVPGLAPGLPPLPVPDPVPHPPKKPP) is disordered. 8 positions are modified to hydroxyproline: Pro5, Pro9, Pro10, Pro12, Pro16, Pro20, Pro31, and Pro35.

In terms of processing, O-glycosylated; contains pentose side chains at some or all of the hydroxyproline residues. Glycosylation is required for full antifungal activity.

In terms of biological role, antimicrobial peptide. Inhibits elongation of hyphae in B.sorokiniana (IC(50)=3.8 uM) but has no effect on this process or on germination of conidia in a panel of other phytopathogenic fungi. At concentrations above 10 uM, has antibacterial activity. The protein is Peptide ToHyp2 of Taraxacum officinale (Common dandelion).